We begin with the raw amino-acid sequence, 878 residues long: Valine--tRNA ligase (878 aa).

The 'HIGH' region motif lies at 45–55; sequence PNVTGQLHMGH. The 'KMSKS' region signature appears at 524 to 528; sequence KMSKS. Lysine 527 serves as a coordination point for ATP. Residues 804–871 are a coiled coil; it reads PLKDLIDLEK…REKEVLEQRI (68 aa).

The protein belongs to the class-I aminoacyl-tRNA synthetase family. ValS type 1 subfamily. As to quaternary structure, monomer.

The protein resides in the cytoplasm. It carries out the reaction tRNA(Val) + L-valine + ATP = L-valyl-tRNA(Val) + AMP + diphosphate. Its function is as follows. Catalyzes the attachment of valine to tRNA(Val). As ValRS can inadvertently accommodate and process structurally similar amino acids such as threonine, to avoid such errors, it has a 'posttransfer' editing activity that hydrolyzes mischarged Thr-tRNA(Val) in a tRNA-dependent manner. In Carboxydothermus hydrogenoformans (strain ATCC BAA-161 / DSM 6008 / Z-2901), this protein is Valine--tRNA ligase.